The primary structure comprises 188 residues: MGISRDSRHKRRLTGGRYPVHKKKRKYELGRPSSNTKLGSKLVRKVRCRGGNLKFRALRLDSGNFSWGSQNVTRKTRVMDVVYNASSNELVRTKTLVKNAIVTVDPTPFKLWFKTHYGLELGKSSEDPQASEKVAALVPRTLLDQFSSGRLLACISSRPGQCGRCDGYVLEGEELNFYRRRMDKKKRV.

Positions 1-34 are disordered; the sequence is MGISRDSRHKRRLTGGRYPVHKKKRKYELGRPSS. Residues 7-26 show a composition bias toward basic residues; that stretch reads SRHKRRLTGGRYPVHKKKRK.

This sequence belongs to the eukaryotic ribosomal protein eS8 family.

This chain is Small ribosomal subunit protein eS8 (RPS8), found in Theileria parva (East coast fever infection agent).